An 85-amino-acid polypeptide reads, in one-letter code: Putative membrane protein insertion efficiency factor (85 aa).

This sequence belongs to the UPF0161 family.

It is found in the cell inner membrane. In terms of biological role, could be involved in insertion of integral membrane proteins into the membrane. In Shewanella woodyi (strain ATCC 51908 / MS32), this protein is Putative membrane protein insertion efficiency factor.